The primary structure comprises 239 residues: MKNNIITPQYNCNGTFLRKNRSFVCRKGRITKSQLQAIEKYWLSIGIDFKLEPLDFTSVFKNSAPVILEIGFGSGESLVKTAANFPNKNFLGIEVYKSGIGSCLRLAHYSGINNLKIIYHDAIEVIDQMILDHTLSKVQIFFPDPWNKKRHHKRRMIQDFFLIKILKKLNNDGILHIVTDSKEYNFFILNLIQNIDNYINLSKKRMCFEHFKYRLVTNFEKKAKLSGNKIFDLIFKLKK.

S-adenosyl-L-methionine is bound by residues E69, E94, D121, and D144. Residue D144 is part of the active site. Residues K148, D180, and 217–220 (TNFE) contribute to the substrate site.

The protein belongs to the class I-like SAM-binding methyltransferase superfamily. TrmB family. As to quaternary structure, monomer.

The catalysed reaction is guanosine(46) in tRNA + S-adenosyl-L-methionine = N(7)-methylguanosine(46) in tRNA + S-adenosyl-L-homocysteine. It functions in the pathway tRNA modification; N(7)-methylguanine-tRNA biosynthesis. In terms of biological role, catalyzes the formation of N(7)-methylguanine at position 46 (m7G46) in tRNA. This is tRNA (guanine-N(7)-)-methyltransferase from Buchnera aphidicola subsp. Schizaphis graminum (strain Sg).